The following is a 150-amino-acid chain: Large ribosomal subunit protein bL9 (150 aa).

The protein belongs to the bacterial ribosomal protein bL9 family.

Functionally, binds to the 23S rRNA. The chain is Large ribosomal subunit protein bL9 from Shewanella halifaxensis (strain HAW-EB4).